Reading from the N-terminus, the 779-residue chain is Vezatin (779 aa).

2 helical membrane passes run 139–159 and 162–182; these read LATP…LLVM and TWWI…YLVI. Residues 430–462 are a coiled coil; that stretch reads VRSLQLHLKALLNEVIILEDELEKLVCTKETQE. Disordered regions lie at residues 618 to 719 and 757 to 779; these read PVDP…DSLQ and EQTF…IEEK. Over residues 625 to 634 the composition is skewed to polar residues; sequence ISNSEPSMNS. Over residues 638-649 the composition is skewed to basic and acidic residues; it reads KVSKNDTEEESN. Positions 706–719 are enriched in polar residues; that stretch reads GLTTAPPTPRDSLQ. Residues 770–779 show a composition bias toward basic and acidic residues; sequence EENKNEIEEK.

It belongs to the vezatin family. In terms of assembly, interacts with USH2A (via the cytoplasmic region); the interaction associates VEZT with the USH2 complex at the stereocilia base. Interacts with myosin MYO7A and the cadherin-catenins complex.

Its subcellular location is the cell membrane. It localises to the cell projection. It is found in the stereocilium membrane. The protein localises to the cell junction. The protein resides in the adherens junction. Its subcellular location is the nucleus. It localises to the cytoplasmic vesicle. It is found in the secretory vesicle. The protein localises to the acrosome. In terms of biological role, plays a pivotal role in the establishment of adherens junctions and their maintenance in adult life. Required for morphogenesis of the preimplantation embryo, and for the implantation process. Functionally, (Microbial infection) In case of Listeria infection, promotes bacterial internalization by participating in myosin VIIa recruitment to the entry site. The sequence is that of Vezatin (VEZT) from Homo sapiens (Human).